The chain runs to 526 residues: Collagen alpha-2(I) chain (526 aa).

Positions 1–291 (GFPGEKGPSG…PRSPPSLRPK (291 aa)) are disordered. 3 stretches are compositionally biased toward low complexity: residues 9 to 36 (SGEAGTAGPPGTPGPQGLLGAPGILGLP), 44 to 81 (LPGVAGALGEPGPLGIAGPPGARGPPGAVGSPGVNGAP), and 110 to 131 (YPGNAGPVGAAGAPGPQGSVGP). Basic and acidic residues predominate over residues 165–176 (RGDKGEPGDKGP). The span at 249–261 (AGPPGPPGPPGPP) shows a compositional bias: pro residues. The propeptide at 263–526 (ASGGGYDFGY…YVDVGPVCFK (264 aa)) is C-terminal propeptide. In terms of domain architecture, Fibrillar collagen NC1 spans 293 to 526 (YEVDATLKSL…YVDVGPVCFK (234 aa)). 3 disulfide bridges follow: cysteine 323–cysteine 355, cysteine 363–cysteine 524, and cysteine 432–cysteine 477. Residues aspartate 341, asparagine 343, glutamine 344, cysteine 346, and aspartate 349 each coordinate Ca(2+).

This sequence belongs to the fibrillar collagen family. As to quaternary structure, trimers of one alpha 2(I) and two alpha 1(I) chains. Interacts (via C-terminus) with TMEM131 (via PapD-L domain); the interaction is direct and is involved in assembly and TRAPPIII ER-to-Golgi transport complex-dependent secretion of collagen. In terms of processing, prolines at the third position of the tripeptide repeating unit (G-X-Y) are hydroxylated in some or all of the chains. As to expression, forms the fibrils of tendon, ligaments and bones. In bones the fibrils are mineralized with calcium hydroxyapatite.

The protein resides in the secreted. It localises to the extracellular space. Its subcellular location is the extracellular matrix. In terms of biological role, type I collagen is a member of group I collagen (fibrillar forming collagen). The polypeptide is Collagen alpha-2(I) chain (COL1A2) (Oryctolagus cuniculus (Rabbit)).